We begin with the raw amino-acid sequence, 98 residues long: Class II hydrophobin 1 (98 aa).

Positions Met-1 to Ala-16 are cleaved as a signal peptide. 4 disulfide bridges follow: Cys-29–Cys-79, Cys-39–Cys-70, Cys-40–Cys-52, and Cys-80–Cys-92.

The protein belongs to the cerato-ulmin hydrophobin family. As to quaternary structure, homodimer. Homodimers further self-assemble to form highly ordered films at water-air interfaces through intermolecular interactions. Expressed in mycelium, conidiating mycelium and aerial hyphae.

The protein resides in the secreted. It localises to the cell wall. Functionally, aerial growth, conidiation, and dispersal of filamentous fungi in the environment rely upon a capability of their secreting small amphipathic proteins called hydrophobins (HPBs) with low sequence identity. Class I can self-assemble into an outermost layer of rodlet bundles on aerial cell surfaces, conferring cellular hydrophobicity that supports fungal growth, development and dispersal; whereas Class II form highly ordered films at water-air interfaces through intermolecular interactions but contribute nothing to the rodlet structure. Hyd1 is a class II hydrophobin that plays probably a role during conidiophore development and in intraspecific signaling or hyphal fusion. Hyd1 and Hyd3 are jointly required for conidial hydrophobicity and dispersal, but seem not to be involved in mycelia hydrophobicity. Inhibits conidial germination in environments not suitable for mycelial growth. Not necessary for root adhesion and colonization. The chain is Class II hydrophobin 1 from Bionectria ochroleuca (Gliocladium roseum).